Consider the following 394-residue polypeptide: Phosphopentomutase (394 aa).

D13, D286, H291, D327, H328, and H339 together coordinate Mn(2+).

Belongs to the phosphopentomutase family. It depends on Mn(2+) as a cofactor.

It localises to the cytoplasm. It carries out the reaction 2-deoxy-alpha-D-ribose 1-phosphate = 2-deoxy-D-ribose 5-phosphate. The catalysed reaction is alpha-D-ribose 1-phosphate = D-ribose 5-phosphate. Its pathway is carbohydrate degradation; 2-deoxy-D-ribose 1-phosphate degradation; D-glyceraldehyde 3-phosphate and acetaldehyde from 2-deoxy-alpha-D-ribose 1-phosphate: step 1/2. Its function is as follows. Isomerase that catalyzes the conversion of deoxy-ribose 1-phosphate (dRib-1-P) and ribose 1-phosphate (Rib-1-P) to deoxy-ribose 5-phosphate (dRib-5-P) and ribose 5-phosphate (Rib-5-P), respectively. The protein is Phosphopentomutase of Bacillus anthracis (strain A0248).